Consider the following 258-residue polypeptide: Glucosamine-6-phosphate deaminase (258 aa).

Residue D65 is the Proton acceptor; for enolization step of the active site. D134 acts as the For ring-opening step in catalysis. H136 serves as the catalytic Proton acceptor; for ring-opening step. The active-site For ring-opening step is the E141.

It belongs to the glucosamine/galactosamine-6-phosphate isomerase family. NagB subfamily.

The enzyme catalyses alpha-D-glucosamine 6-phosphate + H2O = beta-D-fructose 6-phosphate + NH4(+). It participates in amino-sugar metabolism; N-acetylneuraminate degradation; D-fructose 6-phosphate from N-acetylneuraminate: step 5/5. In terms of biological role, catalyzes the reversible isomerization-deamination of glucosamine 6-phosphate (GlcN6P) to form fructose 6-phosphate (Fru6P) and ammonium ion. This is Glucosamine-6-phosphate deaminase from Corynebacterium kroppenstedtii (strain DSM 44385 / JCM 11950 / CIP 105744 / CCUG 35717).